The primary structure comprises 410 residues: Probable peptidoglycan glycosyltransferase FtsW (410 aa).

9 helical membrane passes run 39-59 (LDPLLIWSATGLLLIGLVMVY), 78-98 (YFLLRHAMFLAVGIGAGLAAF), 108-128 (FAPWLFLIGVMLLVVVLIPGV), 177-197 (GFLPMAAMILLVGFLLLGEPD), 198-218 (FGAFVVITAIAFGVLFLGGIN), 221-241 (VFALLALVAVIGFMLLIWLSP), 303-323 (IAEELGFAGVLTVIALFAILI), 342-362 (GLVAMGIGLWLGVQSFINMGV), and 374-394 (LPLMSFGGSGIVANCLALAIL).

This sequence belongs to the SEDS family. FtsW subfamily.

Its subcellular location is the cell inner membrane. The enzyme catalyses [GlcNAc-(1-&gt;4)-Mur2Ac(oyl-L-Ala-gamma-D-Glu-L-Lys-D-Ala-D-Ala)](n)-di-trans,octa-cis-undecaprenyl diphosphate + beta-D-GlcNAc-(1-&gt;4)-Mur2Ac(oyl-L-Ala-gamma-D-Glu-L-Lys-D-Ala-D-Ala)-di-trans,octa-cis-undecaprenyl diphosphate = [GlcNAc-(1-&gt;4)-Mur2Ac(oyl-L-Ala-gamma-D-Glu-L-Lys-D-Ala-D-Ala)](n+1)-di-trans,octa-cis-undecaprenyl diphosphate + di-trans,octa-cis-undecaprenyl diphosphate + H(+). It functions in the pathway cell wall biogenesis; peptidoglycan biosynthesis. In terms of biological role, peptidoglycan polymerase that is essential for cell division. The polypeptide is Probable peptidoglycan glycosyltransferase FtsW (Aromatoleum aromaticum (strain DSM 19018 / LMG 30748 / EbN1) (Azoarcus sp. (strain EbN1))).